The primary structure comprises 319 residues: tRNA dimethylallyltransferase (319 aa).

9-16 lines the ATP pocket; it reads GPTAVGKS. 11–16 lines the substrate pocket; that stretch reads TAVGKS. The interaction with substrate tRNA stretch occupies residues 39–42; sequence DSMQ.

The protein belongs to the IPP transferase family. As to quaternary structure, monomer. It depends on Mg(2+) as a cofactor.

It carries out the reaction adenosine(37) in tRNA + dimethylallyl diphosphate = N(6)-dimethylallyladenosine(37) in tRNA + diphosphate. Its function is as follows. Catalyzes the transfer of a dimethylallyl group onto the adenine at position 37 in tRNAs that read codons beginning with uridine, leading to the formation of N6-(dimethylallyl)adenosine (i(6)A). The sequence is that of tRNA dimethylallyltransferase from Thermobifida fusca (strain YX).